The chain runs to 525 residues: KSTWLTKTRNIWSAPSPTHLMISMITWPVMSNSPNNVLNIEGCPSLYKFNPFRGGLNRIVEWILAPEEPKALVYADNIYIVHSNTWYSIDLEKGEANCTRQHMQAAMYYILTRGWSDNGDPMFNQTWATFAMNIAPALVVDSSCLIMNLQIKTYGQGSGNAATFINNHLLSTLVLDQWNLMRQPRPDSEEFKSIEDKLGINFKIERSIDDIRGKLRQLVPLAQPGYLSGGVEPEQSSPTVELDLLGWSATYSKDLGIYVPVLDKERLFCSAAYPKGVENKSLKSKVGIEQAYKVVRYEALRLVGGWNYPLLNKACKNNAGAARRHLEAKGFPLDEFLAEWSELSEFGEAFEGFNIKLTVTSESLAELNKPVPPKPPNVNRPVNTGGLKAVSNALKTGRYRNEAGLSGLVLLATARSRLQDAVKAKAEAEKLHKSKPDDPDADWFERSETLSDLLEKADIASKVAHSALVETSDALEAVQSTSVYTPKYPEVKNPQTASNPVVGLHLPAKRATGVQAALLGAGTSR.

The 201-residue stretch at Leu72–Ala272 folds into the RdRp catalytic domain.

As to quaternary structure, interacts with VP3 in the cytoplasm. Post-translationally, may exist in multiple phosphorylated forms.

It localises to the virion. It carries out the reaction RNA(n) + a ribonucleoside 5'-triphosphate = RNA(n+1) + diphosphate. Its function is as follows. RNA-dependent RNA polymerase which is found both free and covalently attached to the genomic RNA. May also contain guanylyl and methyl transferase activities. The sequence is that of RNA-directed RNA polymerase (VP1) from Gallus gallus (Chicken).